The chain runs to 282 residues: DNA-3-methyladenine glycosylase 2 (282 aa).

D238 serves as the catalytic Proton acceptor.

It belongs to the alkylbase DNA glycosidase AlkA family. In terms of assembly, monomer.

It carries out the reaction Hydrolysis of alkylated DNA, releasing 3-methyladenine, 3-methylguanine, 7-methylguanine and 7-methyladenine.. Functionally, hydrolysis of the deoxyribose N-glycosidic bond to excise 3-methyladenine, 3-methylguanine, 7-methylguanine, O2-methylthymine, and O2-methylcytosine from the damaged DNA polymer formed by alkylation lesions. The protein is DNA-3-methyladenine glycosylase 2 (alkA) of Escherichia coli (strain K12).